The primary structure comprises 520 residues: Bifunctional purine biosynthesis protein PurH (520 aa).

The MGS-like domain occupies 1–150 (MSDDRKAIKR…KNHPSVAVVV (150 aa)).

Belongs to the PurH family.

It carries out the reaction (6R)-10-formyltetrahydrofolate + 5-amino-1-(5-phospho-beta-D-ribosyl)imidazole-4-carboxamide = 5-formamido-1-(5-phospho-D-ribosyl)imidazole-4-carboxamide + (6S)-5,6,7,8-tetrahydrofolate. The catalysed reaction is IMP + H2O = 5-formamido-1-(5-phospho-D-ribosyl)imidazole-4-carboxamide. It participates in purine metabolism; IMP biosynthesis via de novo pathway; 5-formamido-1-(5-phospho-D-ribosyl)imidazole-4-carboxamide from 5-amino-1-(5-phospho-D-ribosyl)imidazole-4-carboxamide (10-formyl THF route): step 1/1. The protein operates within purine metabolism; IMP biosynthesis via de novo pathway; IMP from 5-formamido-1-(5-phospho-D-ribosyl)imidazole-4-carboxamide: step 1/1. In Corynebacterium glutamicum (strain ATCC 13032 / DSM 20300 / JCM 1318 / BCRC 11384 / CCUG 27702 / LMG 3730 / NBRC 12168 / NCIMB 10025 / NRRL B-2784 / 534), this protein is Bifunctional purine biosynthesis protein PurH.